The sequence spans 273 residues: Bis(5'-nucleosyl)-tetraphosphatase, symmetrical (273 aa).

It belongs to the Ap4A hydrolase family.

The catalysed reaction is P(1),P(4)-bis(5'-adenosyl) tetraphosphate + H2O = 2 ADP + 2 H(+). Hydrolyzes diadenosine 5',5'''-P1,P4-tetraphosphate to yield ADP. The polypeptide is Bis(5'-nucleosyl)-tetraphosphatase, symmetrical (Aeromonas salmonicida (strain A449)).